A 266-amino-acid polypeptide reads, in one-letter code: Small ribosomal subunit protein uS2 (266 aa).

Residues 227 to 266 (GVSFTEETPSEPIQSDSSEEEEGSLDISDLFEDTDLKEEE) form a disordered region. A compositionally biased stretch (polar residues) spans 231–240 (TEETPSEPIQ). The span at 243–266 (SSEEEEGSLDISDLFEDTDLKEEE) shows a compositional bias: acidic residues.

It belongs to the universal ribosomal protein uS2 family.

The protein is Small ribosomal subunit protein uS2 of Pseudothermotoga lettingae (strain ATCC BAA-301 / DSM 14385 / NBRC 107922 / TMO) (Thermotoga lettingae).